The following is a 228-amino-acid chain: Urease accessory protein UreF (228 aa).

It belongs to the UreF family. As to quaternary structure, ureD, UreF and UreG form a complex that acts as a GTP-hydrolysis-dependent molecular chaperone, activating the urease apoprotein by helping to assemble the nickel containing metallocenter of UreC. The UreE protein probably delivers the nickel.

The protein resides in the cytoplasm. Functionally, required for maturation of urease via the functional incorporation of the urease nickel metallocenter. The polypeptide is Urease accessory protein UreF (Brucella ovis (strain ATCC 25840 / 63/290 / NCTC 10512)).